The following is a 266-amino-acid chain: Heat-inducible transcription repressor HrcA (266 aa).

The protein belongs to the HrcA family.

Its function is as follows. Negative regulator of class I heat shock genes (grpE-dnaK-dnaJ and groELS operons). Prevents heat-shock induction of these operons. The sequence is that of Heat-inducible transcription repressor HrcA from Helicobacter pylori (strain ATCC 700392 / 26695) (Campylobacter pylori).